The chain runs to 287 residues: Small ribosomal subunit biogenesis GTPase RsgA (287 aa).

Residues 63–223 (KNLLIRPKVA…VIDTPGFGSL (161 aa)) form the CP-type G domain. Residues 113-116 (SKMD) and 166-174 (GQSGVGKST) contribute to the GTP site. Zn(2+) contacts are provided by cysteine 246, cysteine 251, histidine 253, and cysteine 259.

The protein belongs to the TRAFAC class YlqF/YawG GTPase family. RsgA subfamily. As to quaternary structure, monomer. Associates with 30S ribosomal subunit, binds 16S rRNA. It depends on Zn(2+) as a cofactor.

It localises to the cytoplasm. In terms of biological role, one of several proteins that assist in the late maturation steps of the functional core of the 30S ribosomal subunit. Helps release RbfA from mature subunits. May play a role in the assembly of ribosomal proteins into the subunit. Circularly permuted GTPase that catalyzes slow GTP hydrolysis, GTPase activity is stimulated by the 30S ribosomal subunit. The protein is Small ribosomal subunit biogenesis GTPase RsgA of Malacoplasma penetrans (strain HF-2) (Mycoplasma penetrans).